A 375-amino-acid chain; its full sequence is GDP-mannose-dependent alpha-mannosyltransferase (375 aa).

Belongs to the glycosyltransferase group 1 family. Glycosyltransferase 4 subfamily.

It participates in phospholipid metabolism; phosphatidylinositol metabolism. In terms of biological role, catalyzes the addition of a mannose residue from GDP-D-mannose to GlcAGroAc2 to generate 1,2-di-O-C16/C18:1-(alpha-D-mannopyranosyl)-(1-4)-(alpha-D-glucopyranosyluronic acid)-(1-3)-glycerol(ManGlcAGroAc2). The chain is GDP-mannose-dependent alpha-mannosyltransferase (mgtA) from Mycolicibacterium smegmatis (strain ATCC 700084 / mc(2)155) (Mycobacterium smegmatis).